We begin with the raw amino-acid sequence, 182 residues long: Ribulose bisphosphate carboxylase small subunit, chloroplastic 4 (182 aa).

Residues 1-41 (MSAAMMNKSVVLSKQCTKPAATPKVVTSKRSFASTVANKNR) constitute a chloroplast transit peptide.

This sequence belongs to the RuBisCO small chain family. Heterohexadecamer of 8 large and 8 small subunits.

The protein localises to the plastid. It localises to the chloroplast. Its function is as follows. RuBisCO catalyzes two reactions: the carboxylation of D-ribulose 1,5-bisphosphate, the primary event in carbon dioxide fixation, as well as the oxidative fragmentation of the pentose substrate. Both reactions occur simultaneously and in competition at the same active site. Although the small subunit is not catalytic it is essential for maximal activity. The polypeptide is Ribulose bisphosphate carboxylase small subunit, chloroplastic 4 (Acetabularia acetabulum (Mermaid's wine glass)).